Consider the following 445-residue polypeptide: Argininosuccinate synthase (445 aa).

ATP-binding positions include 17-25 (AFSGGLDTS) and Ala-43. Position 99 (Tyr-99) interacts with L-citrulline. Gly-129 and Thr-131 together coordinate ATP. Residues Thr-131, Asn-135, and Asp-136 each coordinate L-aspartate. Asn-135 lines the L-citrulline pocket. Asp-136 is a binding site for ATP. 2 residues coordinate L-citrulline: Arg-139 and Ser-192. Residue Asp-194 participates in ATP binding. L-citrulline is bound by residues Thr-201, Glu-203, and Glu-280.

The protein belongs to the argininosuccinate synthase family. Type 2 subfamily. As to quaternary structure, homotetramer.

It localises to the cytoplasm. It carries out the reaction L-citrulline + L-aspartate + ATP = 2-(N(omega)-L-arginino)succinate + AMP + diphosphate + H(+). Its pathway is amino-acid biosynthesis; L-arginine biosynthesis; L-arginine from L-ornithine and carbamoyl phosphate: step 2/3. The protein is Argininosuccinate synthase of Rhodopseudomonas palustris (strain BisB5).